A 434-amino-acid polypeptide reads, in one-letter code: uncharacterized protein (434 aa).

The next 5 membrane-spanning stretches (helical) occupy residues 27-47, 64-84, 244-264, 289-309, and 387-407; these read IFLL…QSVI, FYLS…FVNW, IILA…ATVL, VPVN…PSLL, and LILT…GAVF.

This sequence belongs to the CbiQ family.

The protein resides in the cell membrane. This is an uncharacterized protein from Mycoplasma pneumoniae (strain ATCC 29342 / M129 / Subtype 1) (Mycoplasmoides pneumoniae).